An 84-amino-acid polypeptide reads, in one-letter code: Small ribosomal subunit protein uS17 (84 aa).

It belongs to the universal ribosomal protein uS17 family. As to quaternary structure, part of the 30S ribosomal subunit.

One of the primary rRNA binding proteins, it binds specifically to the 5'-end of 16S ribosomal RNA. This chain is Small ribosomal subunit protein uS17, found in Photorhabdus laumondii subsp. laumondii (strain DSM 15139 / CIP 105565 / TT01) (Photorhabdus luminescens subsp. laumondii).